The chain runs to 452 residues: Adenylosuccinate synthetase isozyme 1 (452 aa).

Residues 1-22 form a disordered region; the sequence is MSGTRASNDRSSHPGGHKRPRY. Residues 37-43 and 65-67 each bind GTP; these read GDEGKGK and GHT. The active-site Proton acceptor is the Asp38. The Mg(2+) site is built by Asp38 and Gly65. Asp38 serves as a coordination point for substrate. Residues 38-41, 63-66, Thr158, Arg172, Asn251, Thr266, and Arg330 contribute to the IMP site; these read DEGK and NAGH. Residue His66 is the Proton donor of the active site. 326–332 is a binding site for substrate; the sequence is VTTGRKR. Residues Arg332, 358-360, and 440-443 each bind GTP; these read KLD and GVGK.

Belongs to the adenylosuccinate synthetase family. In terms of assembly, homodimer. It depends on Mg(2+) as a cofactor.

The protein localises to the cytoplasm. The catalysed reaction is IMP + L-aspartate + GTP = N(6)-(1,2-dicarboxyethyl)-AMP + GDP + phosphate + 2 H(+). The protein operates within purine metabolism; AMP biosynthesis via de novo pathway; AMP from IMP: step 1/2. In terms of biological role, component of the purine nucleotide cycle (PNC), which interconverts IMP and AMP to regulate the nucleotide levels in various tissues, and which contributes to glycolysis and ammoniagenesis. Catalyzes the first committed step in the biosynthesis of AMP from IMP. The protein is Adenylosuccinate synthetase isozyme 1 (adss1) of Xenopus tropicalis (Western clawed frog).